Consider the following 353-residue polypeptide: Photosystem II D2 protein (353 aa).

An N-acetylthreonine modification is found at T2. T2 carries the post-translational modification Phosphothreonine. Residues 41-61 (CAYFAVGGWFTGTTFVTSWYT) form a helical membrane-spanning segment. H118 lines the chlorophyll a pocket. The chain crosses the membrane as a helical span at residues 125 to 141 (GFMLRQFELARSVQLRP). The pheophytin a site is built by Q130 and N143. A helical transmembrane segment spans residues 153-166 (VFVSVFLIYPLGQS). Residue H198 coordinates chlorophyll a. The helical transmembrane segment at 208-228 (AALLCAIHGATVENTLFEDGD) threads the bilayer. Residues H215 and F262 each coordinate a plastoquinone. Fe cation is bound at residue H215. H269 is a Fe cation binding site. The chain crosses the membrane as a helical span at residues 279 to 295 (GLWMSALGVVGLALNLR).

It belongs to the reaction center PufL/M/PsbA/D family. In terms of assembly, PSII is composed of 1 copy each of membrane proteins PsbA, PsbB, PsbC, PsbD, PsbE, PsbF, PsbH, PsbI, PsbJ, PsbK, PsbL, PsbM, PsbT, PsbX, PsbY, PsbZ, Psb30/Ycf12, at least 3 peripheral proteins of the oxygen-evolving complex and a large number of cofactors. It forms dimeric complexes. Requires The D1/D2 heterodimer binds P680, chlorophylls that are the primary electron donor of PSII, and subsequent electron acceptors. It shares a non-heme iron and each subunit binds pheophytin, quinone, additional chlorophylls, carotenoids and lipids. There is also a Cl(-1) ion associated with D1 and D2, which is required for oxygen evolution. The PSII complex binds additional chlorophylls, carotenoids and specific lipids. as cofactor.

It localises to the plastid. It is found in the chloroplast thylakoid membrane. The enzyme catalyses 2 a plastoquinone + 4 hnu + 2 H2O = 2 a plastoquinol + O2. Its function is as follows. Photosystem II (PSII) is a light-driven water:plastoquinone oxidoreductase that uses light energy to abstract electrons from H(2)O, generating O(2) and a proton gradient subsequently used for ATP formation. It consists of a core antenna complex that captures photons, and an electron transfer chain that converts photonic excitation into a charge separation. The D1/D2 (PsbA/PsbD) reaction center heterodimer binds P680, the primary electron donor of PSII as well as several subsequent electron acceptors. D2 is needed for assembly of a stable PSII complex. In Lactuca sativa (Garden lettuce), this protein is Photosystem II D2 protein.